A 38-amino-acid chain; its full sequence is uncharacterized protein (38 aa).

The protein belongs to the asfivirus C84L family.

This is an uncharacterized protein from Ornithodoros (relapsing fever ticks).